The primary structure comprises 522 residues: Peptide methionine sulfoxide reductase MsrA/MsrB (522 aa).

In terms of domain architecture, Thioredoxin spans 17-174; sequence LALGACSPKI…ALALIRNPNA (158 aa). An intrachain disulfide couples C68 to C71. The peptide methionine sulfoxide reductase A stretch occupies residues 199–354; it reads RTIYLAGGCF…PNGYCHIDIR (156 aa). C207 is a catalytic residue. One can recognise a MsrB domain in the interval 383–506; sequence DAELKRTLTE…NGASLKFIPL (124 aa). A disulfide bond links C440 and C495. The active-site Nucleophile is the C495.

It in the N-terminal section; belongs to the thioredoxin family. This sequence in the central section; belongs to the MsrA Met sulfoxide reductase family. The protein in the C-terminal section; belongs to the MsrB Met sulfoxide reductase family.

The enzyme catalyses L-methionyl-[protein] + [thioredoxin]-disulfide + H2O = L-methionyl-(S)-S-oxide-[protein] + [thioredoxin]-dithiol. It carries out the reaction [thioredoxin]-disulfide + L-methionine + H2O = L-methionine (S)-S-oxide + [thioredoxin]-dithiol. The catalysed reaction is L-methionyl-[protein] + [thioredoxin]-disulfide + H2O = L-methionyl-(R)-S-oxide-[protein] + [thioredoxin]-dithiol. In terms of biological role, has an important function as a repair enzyme for proteins that have been inactivated by oxidation. Catalyzes the reversible oxidation-reduction of methionine sulfoxide in proteins to methionine. The chain is Peptide methionine sulfoxide reductase MsrA/MsrB (msrAB) from Neisseria gonorrhoeae.